A 464-amino-acid polypeptide reads, in one-letter code: Asparagine--tRNA ligase (464 aa).

Belongs to the class-II aminoacyl-tRNA synthetase family. As to quaternary structure, homodimer.

It localises to the cytoplasm. It catalyses the reaction tRNA(Asn) + L-asparagine + ATP = L-asparaginyl-tRNA(Asn) + AMP + diphosphate + H(+). This chain is Asparagine--tRNA ligase, found in Xanthomonas axonopodis pv. citri (strain 306).